We begin with the raw amino-acid sequence, 423 residues long: Serpin B12 (423 aa).

Positions 63 to 72 (LSKDEHKEPN) are enriched in basic and acidic residues. Residues 63 to 106 (LSKDEHKEPNDPSPQSESKASDSSLEGQKQTSASQDQQGESTND) are disordered. The span at 75 to 106 (SPQSESKASDSSLEGQKQTSASQDQQGESTND) shows a compositional bias: polar residues.

This sequence belongs to the serpin family. Ov-serpin subfamily. Interacts with SLFN12; as part of a pathway regulating cell differentiation.

The protein resides in the cytoplasm. In terms of biological role, inhibits trypsin and plasmin, but not thrombin, coagulation factor Xa, or urokinase-type plasminogen activator. May play a role in cell differentiation. This is Serpin B12 (Serpinb12) from Mus musculus (Mouse).